The chain runs to 216 residues: MSSTLVLETTAYTLEQLIHLDAPQIALAGRSNVGKSSLVNALARRKQLAKTSSTPGKTRSVNYYRVEPEGFYIVDLPGYGYAQCSKEERKKWAKLIEKYIVSCKSLRGLAVLLDCRLDPQRLDVDLTSYARANNIPLLPVLTKGDKCKLRERSDRQKQWAVLLGGRKPLVTASMTGLGIADLWRELRALAAGGLSADDEAEDAPSDTIDAIDDVTA.

Residues 21-192 form the EngB-type G domain; it reads DAPQIALAGR…WRELRALAAG (172 aa). Residues 29-36, 56-60, 75-78, 142-145, and 170-173 each bind GTP; these read GRSNVGKS, GKTRS, DLPG, TKGD, and VTAS. Residues Ser-36 and Thr-58 each coordinate Mg(2+). Residues 195 to 216 form a disordered region; the sequence is SADDEAEDAPSDTIDAIDDVTA. Over residues 196–216 the composition is skewed to acidic residues; that stretch reads ADDEAEDAPSDTIDAIDDVTA.

This sequence belongs to the TRAFAC class TrmE-Era-EngA-EngB-Septin-like GTPase superfamily. EngB GTPase family. Mg(2+) serves as cofactor.

Its function is as follows. Necessary for normal cell division and for the maintenance of normal septation. The sequence is that of Probable GTP-binding protein EngB from Nitratidesulfovibrio vulgaris (strain DP4) (Desulfovibrio vulgaris).